A 112-amino-acid chain; its full sequence is Putative UPF0320 protein YEL074W (112 aa).

The segment at 93–112 (EKSPSKSPKHKNILPFNFTK) is disordered.

This sequence belongs to the UPF0320 family.

The chain is Putative UPF0320 protein YEL074W from Saccharomyces cerevisiae (strain ATCC 204508 / S288c) (Baker's yeast).